We begin with the raw amino-acid sequence, 286 residues long: MAAITAQMVKELREMTGAGMMDCKKALVEVEGDLEKAVDWLRQKGMAKAAKKSGRATSEGLVTVALSDDGKTVAMASLLCETDFVARGDQFQDMAAKVAKSVLDNAPADAAALEALMGEEVTQLIASVGENMQLGRFARHVKPCESSLVGQYIHANGKIGVLVFLTCGKAESVDKPEVQELAKNIAMQVAAASPMALDAASLDQAAVEREREVYRQKALEEGKPANIVDKIADGAVKKFQKEVCLMEQPYIRDDKKTITDVVRETGKAVGDEITVTGFERIQLAAE.

The interval 82–85 (TDFV) is involved in Mg(2+) ion dislocation from EF-Tu.

This sequence belongs to the EF-Ts family.

The protein localises to the cytoplasm. Its function is as follows. Associates with the EF-Tu.GDP complex and induces the exchange of GDP to GTP. It remains bound to the aminoacyl-tRNA.EF-Tu.GTP complex up to the GTP hydrolysis stage on the ribosome. The chain is Elongation factor Ts from Desulfovibrio desulfuricans (strain ATCC 27774 / DSM 6949 / MB).